The following is a 552-amino-acid chain: Ferry endosomal RAB5 effector complex subunit 3 (552 aa).

Residues 383 to 403 (LKESLDSGNQNGGNDDKTKNA) form a disordered region.

In terms of assembly, component of the FERRY complex composed of five subunits, TBCK, PPP1R21, FERRY3, CRYZL1 and GATD1 with a ratio of 1:2:1:2:4, respectively.

The protein resides in the cytoplasm. It is found in the early endosome. Component of the FERRY complex (Five-subunit Endosomal Rab5 and RNA/ribosome intermediary). The FERRY complex directly interacts with mRNAs and RAB5A, and functions as a RAB5A effector involved in the localization and the distribution of specific mRNAs most likely by mediating their endosomal transport. The complex recruits mRNAs and ribosomes to early endosomes through direct mRNA-interaction. Plays a role in mast cell degranulation. The polypeptide is Ferry endosomal RAB5 effector complex subunit 3 (Homo sapiens (Human)).